Consider the following 336-residue polypeptide: Tetraacyldisaccharide 4'-kinase (336 aa).

60–67 provides a ligand contact to ATP; sequence TVGGTGKT.

Belongs to the LpxK family.

It catalyses the reaction a lipid A disaccharide + ATP = a lipid IVA + ADP + H(+). It functions in the pathway glycolipid biosynthesis; lipid IV(A) biosynthesis; lipid IV(A) from (3R)-3-hydroxytetradecanoyl-[acyl-carrier-protein] and UDP-N-acetyl-alpha-D-glucosamine: step 6/6. Functionally, transfers the gamma-phosphate of ATP to the 4'-position of a tetraacyldisaccharide 1-phosphate intermediate (termed DS-1-P) to form tetraacyldisaccharide 1,4'-bis-phosphate (lipid IVA). This Pseudomonas fluorescens (strain Pf0-1) protein is Tetraacyldisaccharide 4'-kinase.